The chain runs to 951 residues: Bifunctional glutamine synthetase adenylyltransferase/adenylyl-removing enzyme (951 aa).

Residues methionine 1–threonine 440 form an adenylyl removase region. Positions histidine 449–serine 951 are adenylyl transferase.

The protein belongs to the GlnE family. Mg(2+) serves as cofactor.

The enzyme catalyses [glutamine synthetase]-O(4)-(5'-adenylyl)-L-tyrosine + phosphate = [glutamine synthetase]-L-tyrosine + ADP. The catalysed reaction is [glutamine synthetase]-L-tyrosine + ATP = [glutamine synthetase]-O(4)-(5'-adenylyl)-L-tyrosine + diphosphate. In terms of biological role, involved in the regulation of glutamine synthetase GlnA, a key enzyme in the process to assimilate ammonia. When cellular nitrogen levels are high, the C-terminal adenylyl transferase (AT) inactivates GlnA by covalent transfer of an adenylyl group from ATP to specific tyrosine residue of GlnA, thus reducing its activity. Conversely, when nitrogen levels are low, the N-terminal adenylyl removase (AR) activates GlnA by removing the adenylyl group by phosphorolysis, increasing its activity. The regulatory region of GlnE binds the signal transduction protein PII (GlnB) which indicates the nitrogen status of the cell. In Yersinia pestis bv. Antiqua (strain Antiqua), this protein is Bifunctional glutamine synthetase adenylyltransferase/adenylyl-removing enzyme.